Consider the following 132-residue polypeptide: L-ectoine synthase (132 aa).

It belongs to the ectoine synthase family.

It carries out the reaction (2S)-4-acetamido-2-aminobutanoate = L-ectoine + H2O. It participates in amine and polyamine biosynthesis; ectoine biosynthesis; L-ectoine from L-aspartate 4-semialdehyde: step 3/3. Its function is as follows. Catalyzes the circularization of gamma-N-acetyl-alpha,gamma-diaminobutyric acid (ADABA) to ectoine (1,4,5,6-tetrahydro-2-methyl-4-pyrimidine carboxylic acid), which is an excellent osmoprotectant. The polypeptide is L-ectoine synthase (Alkalilimnicola ehrlichii (strain ATCC BAA-1101 / DSM 17681 / MLHE-1)).